The chain runs to 288 residues: MRIRVPATSANLGPGFDSCGLALTLYLTLDIGGEAETWYIEHDIGGGIPHDETNVIIETALHLAPNLTPHHLVMTCDIPPARGLGSSSAAVVAGIELANTLAELNLSKEEKVRIAAEIEGHPDNVAPAVLGNWVVGAKLDGEDFYVRHLFPDCALIAFIPKKELLTSESRGVLPDALPFKEAVQASSIANVMIAAILRNDMTLAGEMMERDLWHEKYRSKLVPHLTQIREVAKSKGAYAACLSGAGPTVLVFAPRNIANTLQASLQTLEIDADVLLLDIEGSGAEVFY.

ATP is bound at residue 79 to 89; the sequence is PPARGLGSSSA.

The protein belongs to the GHMP kinase family. Homoserine kinase subfamily.

The protein localises to the cytoplasm. It carries out the reaction L-homoserine + ATP = O-phospho-L-homoserine + ADP + H(+). The protein operates within amino-acid biosynthesis; L-threonine biosynthesis; L-threonine from L-aspartate: step 4/5. Catalyzes the ATP-dependent phosphorylation of L-homoserine to L-homoserine phosphate. The polypeptide is Homoserine kinase (Listeria welshimeri serovar 6b (strain ATCC 35897 / DSM 20650 / CCUG 15529 / CIP 8149 / NCTC 11857 / SLCC 5334 / V8)).